The sequence spans 377 residues: Stimulator of interferon genes protein (377 aa).

Residues 1 to 21 lie on the Cytoplasmic side of the membrane; that stretch reads MRRAEENNGFGTIPKRRNQHT. A helical transmembrane segment spans residues 22–42; sequence PFYASIGMIVVIIVAFTSYHI. Topologically, residues 43–57 are extracellular; sequence TSYGDDRNRAMRQYS. Residues 58-80 form a helical membrane-spanning segment; sequence FTFSLAYLAFLVGELLRRCCLFA. The Cytoplasmic segment spans residues 81–101; the sequence is EEYRHIETRYNGSLKKAIQTT. A helical membrane pass occupies residues 102 to 122; the sequence is FSFGHNNVLFVASLLFFVVFV. Residues 123–154 lie on the Extracellular side of the membrane; sequence ASNDPNGSSSVIQGNSTAEPHTEMRQTSGWQG. Residues 155-175 traverse the membrane as a helical segment; sequence LWGQFIISALLTPLVVHLLGL. The Cytoplasmic portion of the chain corresponds to 176–377; that stretch reads RELSKVEESQ…LKDSELEIGG (202 aa). Residues Tyr206, Arg272, 278–279, and Thr303 each bind 2',3'-cGAMP; that span reads RH. Residues Tyr206, Arg272, Arg278, and 300 to 303 each bind 3',3'-c-di-GMP; that span reads EYAT.

Belongs to the TMEM173 family. In terms of assembly, homodimer.

It is found in the endoplasmic reticulum membrane. Its function is as follows. Sensor of cytosolic DNA from bacteria and viruses that promotes autophagy. Acts by recognizing and binding cyclic GMP-AMP (cGAMP), a messenger produced by CGAS in response to DNA in the cytosol. Following cGAMP-binding, promotes the formation of autophagosomes, leading to target cytosolic DNA for degradation by the lysosome. Exhibits guanine base-specific ligand recognition. Binds 3'-3'linked cGAMP, 2'-3' linked cGAMP and 3'-3' linked c-di-GMP with much greater affinity as compared to 3'-3' linked c-di-AMP. Lacks the C-terminal tail (CTT) found in mammalian orthologs which is essential for interferon signaling. The sequence is that of Stimulator of interferon genes protein from Nematostella vectensis (Starlet sea anemone).